The following is a 63-amino-acid chain: uncharacterized protein (63 aa).

This is an uncharacterized protein from Haemophilus influenzae (strain ATCC 51907 / DSM 11121 / KW20 / Rd).